A 318-amino-acid chain; its full sequence is L-lactate dehydrogenase (318 aa).

NAD(+) is bound by residues valine 18, aspartate 39, lysine 44, tyrosine 69, and 83–84 (GA). Residues glutamine 86 and arginine 92 each contribute to the substrate site. NAD(+)-binding positions include serine 105, 122-124 (VSN), and serine 147. 124–127 (NPVD) provides a ligand contact to substrate. Substrate is bound at residue 152–155 (DTSR). Catalysis depends on histidine 179, which acts as the Proton acceptor. Tyrosine 225 bears the Phosphotyrosine mark. Substrate is bound at residue threonine 234.

Belongs to the LDH/MDH superfamily. LDH family. In terms of assembly, homotetramer.

It is found in the cytoplasm. It catalyses the reaction (S)-lactate + NAD(+) = pyruvate + NADH + H(+). It participates in fermentation; pyruvate fermentation to lactate; (S)-lactate from pyruvate: step 1/1. Functionally, catalyzes the conversion of lactate to pyruvate. The polypeptide is L-lactate dehydrogenase (Clostridium botulinum (strain Okra / Type B1)).